The sequence spans 357 residues: DNA integrity scanning protein DisA (357 aa).

The DAC domain maps to 3 to 141 (RPTLRETVAR…GGERHVVADS (139 aa)). Residues Gly-70, Leu-88, and 101–105 (TRHRS) contribute to the ATP site.

Belongs to the DisA family. In terms of assembly, homooctamer. Mg(2+) serves as cofactor.

It catalyses the reaction 2 ATP = 3',3'-c-di-AMP + 2 diphosphate. Its function is as follows. Participates in a DNA-damage check-point. DisA forms globular foci that rapidly scan along the chromosomes searching for lesions. Also has diadenylate cyclase activity, catalyzing the condensation of 2 ATP molecules into cyclic di-AMP (c-di-AMP). c-di-AMP likely acts as a signaling molecule that may couple DNA integrity with a cellular process. The polypeptide is DNA integrity scanning protein DisA (Mycolicibacterium paratuberculosis (strain ATCC BAA-968 / K-10) (Mycobacterium paratuberculosis)).